The following is a 235-amino-acid chain: Large ribosomal subunit protein uL4 (235 aa).

Residues 45–75 (RAGTASTKTRGEVSGGGRKPWPQKHTGRARH) are disordered. Residues 65–75 (WPQKHTGRARH) are compositionally biased toward basic residues.

Belongs to the universal ribosomal protein uL4 family. As to quaternary structure, part of the 50S ribosomal subunit.

In terms of biological role, one of the primary rRNA binding proteins, this protein initially binds near the 5'-end of the 23S rRNA. It is important during the early stages of 50S assembly. It makes multiple contacts with different domains of the 23S rRNA in the assembled 50S subunit and ribosome. Functionally, forms part of the polypeptide exit tunnel. This chain is Large ribosomal subunit protein uL4, found in Thermotoga petrophila (strain ATCC BAA-488 / DSM 13995 / JCM 10881 / RKU-1).